Reading from the N-terminus, the 286-residue chain is Sulfate transport system permease protein CysW (286 aa).

The next 6 membrane-spanning stretches (helical) occupy residues 20–40 (LLPLALIGISLLYVGLIIIIP), 74–94 (LMGVISVPLNTLFGLAAAFAI), 108–128 (VIDLPFSISPVVAGLMIVLLY), 145–165 (IIFAWPGMALATIFVSMPFVA), 207–227 (LYGVVLTTARALGEFGAVSVV), and 255–275 (YTAALLLGGISLVTLVLKALL). Residues 69 to 272 (IRLTLLMGVI…GISLVTLVLK (204 aa)) form the ABC transmembrane type-1 domain.

Belongs to the binding-protein-dependent transport system permease family. CysTW subfamily. The complex is composed of two ATP-binding proteins (CysA), two transmembrane proteins (CysT and CysW) and a solute-binding protein (CysP).

It is found in the cell inner membrane. Functionally, part of the ABC transporter complex CysAWTP (TC 3.A.1.6.1) involved in sulfate/thiosulfate import. Probably responsible for the translocation of the substrate across the membrane. The polypeptide is Sulfate transport system permease protein CysW (cysW) (Synechococcus elongatus (strain ATCC 33912 / PCC 7942 / FACHB-805) (Anacystis nidulans R2)).